Reading from the N-terminus, the 604-residue chain is Elongation factor 4 (604 aa).

One can recognise a tr-type G domain in the interval 9–191 (DAIRNFCIIA…AVISRVPAPA (183 aa)). GTP contacts are provided by residues 21–26 (DHGKST) and 138–141 (NKID).

Belongs to the TRAFAC class translation factor GTPase superfamily. Classic translation factor GTPase family. LepA subfamily.

It is found in the cell inner membrane. The enzyme catalyses GTP + H2O = GDP + phosphate + H(+). Functionally, required for accurate and efficient protein synthesis under certain stress conditions. May act as a fidelity factor of the translation reaction, by catalyzing a one-codon backward translocation of tRNAs on improperly translocated ribosomes. Back-translocation proceeds from a post-translocation (POST) complex to a pre-translocation (PRE) complex, thus giving elongation factor G a second chance to translocate the tRNAs correctly. Binds to ribosomes in a GTP-dependent manner. The chain is Elongation factor 4 from Prosthecochloris aestuarii (strain DSM 271 / SK 413).